A 329-amino-acid chain; its full sequence is Flotillin-like protein FloA (329 aa).

Transmembrane regions (helical) follow at residues 4–24 (FIPFIILIGVAFVILSIILSF) and 27–47 (VGLWITAQFSGVKVGIFTLVG).

It belongs to the flotillin-like FloA family. Homooligomerizes.

Its subcellular location is the cell membrane. The protein resides in the membrane raft. Functionally, found in functional membrane microdomains (FMM) that may be equivalent to eukaryotic membrane rafts. FMMs are highly dynamic and increase in number as cells age. Flotillins are thought to be important factors in membrane fluidity. This Alkaliphilus metalliredigens (strain QYMF) protein is Flotillin-like protein FloA.